The chain runs to 486 residues: UDP-N-acetylmuramoyl-L-alanyl-D-glutamate--2,6-diaminopimelate ligase (486 aa).

Ser30 is a binding site for UDP-N-acetyl-alpha-D-muramoyl-L-alanyl-D-glutamate. 112–118 (GTNGKTT) contributes to the ATP binding site. UDP-N-acetyl-alpha-D-muramoyl-L-alanyl-D-glutamate contacts are provided by residues 154–155 (TT), Ser181, Gln187, and Arg189. An N6-carboxylysine modification is found at Lys221. Meso-2,6-diaminopimelate-binding positions include Arg378, 402–405 (DNPR), Gly455, and Glu459. Residues 402–405 (DNPR) carry the Meso-diaminopimelate recognition motif motif.

The protein belongs to the MurCDEF family. MurE subfamily. Mg(2+) serves as cofactor. Post-translationally, carboxylation is probably crucial for Mg(2+) binding and, consequently, for the gamma-phosphate positioning of ATP.

It localises to the cytoplasm. The catalysed reaction is UDP-N-acetyl-alpha-D-muramoyl-L-alanyl-D-glutamate + meso-2,6-diaminopimelate + ATP = UDP-N-acetyl-alpha-D-muramoyl-L-alanyl-gamma-D-glutamyl-meso-2,6-diaminopimelate + ADP + phosphate + H(+). It participates in cell wall biogenesis; peptidoglycan biosynthesis. Catalyzes the addition of meso-diaminopimelic acid to the nucleotide precursor UDP-N-acetylmuramoyl-L-alanyl-D-glutamate (UMAG) in the biosynthesis of bacterial cell-wall peptidoglycan. The chain is UDP-N-acetylmuramoyl-L-alanyl-D-glutamate--2,6-diaminopimelate ligase from Cytophaga hutchinsonii (strain ATCC 33406 / DSM 1761 / CIP 103989 / NBRC 15051 / NCIMB 9469 / D465).